Here is a 457-residue protein sequence, read N- to C-terminus: Carboxypeptidase N catalytic chain (457 aa).

The first 23 residues, 1 to 23 (MPDLPSAFLPLLLLSKFVTPVTF), serve as a signal peptide directing secretion. Positions 24 to 338 (RHHRYDDLVR…EALIQFLEQV (315 aa)) constitute a Peptidase M14 domain. The cysteines at positions 42 and 104 are disulfide-linked. 3 residues coordinate Zn(2+): histidine 86, glutamate 89, and histidine 216. A disulfide bond links cysteine 271 and cysteine 311. Glutamate 308 (proton donor/acceptor) is an active-site residue. Residues threonine 400, threonine 402, and threonine 409 are each glycosylated (O-linked (GalNAc...) threonine). The tract at residues 418–457 (SSSQVYPVQRAPGRGQGGRAKQPRTSRKKDPATKRHRGPA) is disordered.

This sequence belongs to the peptidase M14 family. As to quaternary structure, tetramer of two catalytic chains and two glycosylated inactive chains. The cofactor is Zn(2+). In terms of tissue distribution, mainly expressed in liver. Also detected in lung, stomach, intestine, spleen and kidney.

It is found in the secreted. The protein resides in the extracellular space. The catalysed reaction is Release of a C-terminal basic amino acid, preferentially lysine.. In terms of biological role, protects the body from potent vasoactive and inflammatory peptides containing C-terminal Arg or Lys (such as kinins or anaphylatoxins) which are released into the circulation. This chain is Carboxypeptidase N catalytic chain (Cpn1), found in Mus musculus (Mouse).